The chain runs to 271 residues: Urease accessory protein UreD (271 aa).

It belongs to the UreD family. UreD, UreF and UreG form a complex that acts as a GTP-hydrolysis-dependent molecular chaperone, activating the urease apoprotein by helping to assemble the nickel containing metallocenter of UreC. The UreE protein probably delivers the nickel.

It localises to the cytoplasm. In terms of biological role, required for maturation of urease via the functional incorporation of the urease nickel metallocenter. The sequence is that of Urease accessory protein UreD from Haemophilus influenzae (strain PittGG).